The following is a 163-amino-acid chain: MKVAVFPGSFDPITWGHIDLIKRSLAIFDKVVVLVAKNKSKKYLLSDVERFSLAKDVISSLNFLNVFVDRYSGFIVDYALINSIKFIVRGIRAFNDFDIEFERYLVNNKLNFKIDTIFLPSSAEHLYVRSDFVKELMMKKDVDLSHFVPELVFNRLKSKFIDK.

Position 9 (Ser9) interacts with substrate. ATP-binding positions include 9 to 10 (SF) and His17. Substrate-binding residues include Lys41, Ile75, and Arg89. ATP is bound by residues 90-92 (GIR), Glu100, and 125-131 (HLYVRSD).

Belongs to the bacterial CoaD family. In terms of assembly, homohexamer. The cofactor is Mg(2+).

The protein localises to the cytoplasm. It catalyses the reaction (R)-4'-phosphopantetheine + ATP + H(+) = 3'-dephospho-CoA + diphosphate. Its pathway is cofactor biosynthesis; coenzyme A biosynthesis; CoA from (R)-pantothenate: step 4/5. Functionally, reversibly transfers an adenylyl group from ATP to 4'-phosphopantetheine, yielding dephospho-CoA (dPCoA) and pyrophosphate. This chain is Phosphopantetheine adenylyltransferase, found in Borrelia garinii subsp. bavariensis (strain ATCC BAA-2496 / DSM 23469 / PBi) (Borreliella bavariensis).